The primary structure comprises 129 residues: Azurin iso-2 (129 aa).

The Plastocyanin-like domain maps to 1–129 (ASCETTVTSG…MMRGTLKLEE (129 aa)). The cysteines at positions 3 and 26 are disulfide-linked. His46, Cys112, His117, and Met121 together coordinate Cu cation.

Its subcellular location is the periplasm. This methylothroph organism uses azurin in the oxidation of methylamine. Iso-2 is probably the acceptor of electrons from methylamine dehydrogenase. This Methylomonas sp. (strain J) protein is Azurin iso-2.